The following is a 317-amino-acid chain: Transaldolase (317 aa).

Lysine 132 (schiff-base intermediate with substrate) is an active-site residue.

Belongs to the transaldolase family. Type 1 subfamily. Homodimer.

The protein localises to the cytoplasm. It catalyses the reaction D-sedoheptulose 7-phosphate + D-glyceraldehyde 3-phosphate = D-erythrose 4-phosphate + beta-D-fructose 6-phosphate. The protein operates within carbohydrate degradation; pentose phosphate pathway; D-glyceraldehyde 3-phosphate and beta-D-fructose 6-phosphate from D-ribose 5-phosphate and D-xylulose 5-phosphate (non-oxidative stage): step 2/3. In terms of biological role, transaldolase is important for the balance of metabolites in the pentose-phosphate pathway. The polypeptide is Transaldolase (Shewanella amazonensis (strain ATCC BAA-1098 / SB2B)).